A 369-amino-acid polypeptide reads, in one-letter code: Peptide chain release factor 2 (369 aa).

Residue Gln-249 is modified to N5-methylglutamine.

This sequence belongs to the prokaryotic/mitochondrial release factor family. Post-translationally, methylated by PrmC. Methylation increases the termination efficiency of RF2.

The protein localises to the cytoplasm. Peptide chain release factor 2 directs the termination of translation in response to the peptide chain termination codons UGA and UAA. In Thermosipho melanesiensis (strain DSM 12029 / CIP 104789 / BI429), this protein is Peptide chain release factor 2.